The primary structure comprises 402 residues: Protein HAIKU1 (402 aa).

Disordered stretches follow at residues 1-44, 63-135, 160-266, and 346-402; these read MDRP…LQTQ, TGSP…QQPM, SSLG…LVPS, and QPLT…WNDY. Residues 24–44 are compositionally biased toward polar residues; it reads LHQSTFAASTSNGAAPRLQTQ. Positions 55 to 64 match the VQ motif; that stretch reads FRSIVQQLTG. Polar residues predominate over residues 76-87; sequence QNNSLRPQNTRL. Residues 103–113 show a composition bias toward pro residues; that stretch reads VPLPSMAPPQS. Residues 160–173 are compositionally biased toward polar residues; the sequence is SSLGDSGPNANQMQ. The span at 218-240 shows a compositional bias: low complexity; that stretch reads MPAQSQSQSQPQPQPQPQQHMMP. The segment covering 257 to 266 has biased composition (pro residues); sequence YLPPPGLVPS. Residues 349–358 show a composition bias toward polar residues; that stretch reads TPNFSFSQIA. The segment covering 371–380 has biased composition (pro residues); that stretch reads QGPPQPPPSP. The span at 381–390 shows a compositional bias: low complexity; sequence GLMFPLSPSG.

As to quaternary structure, interacts with WRKY10. Interacts with MPK6.

The protein resides in the nucleus. Functionally, modulates seed size by negatively regulating the cellularization of syncytial endosperm. May function by binding and modulating the activity of WRKY10 transcription factor. The sequence is that of Protein HAIKU1 from Arabidopsis thaliana (Mouse-ear cress).